The following is a 264-amino-acid chain: 1-(5-phosphoribosyl)-5-[(5-phosphoribosylamino)methylideneamino] imidazole-4-carboxamide isomerase (264 aa).

This sequence belongs to the HisA/HisF family.

The protein resides in the cytoplasm. It catalyses the reaction 1-(5-phospho-beta-D-ribosyl)-5-[(5-phospho-beta-D-ribosylamino)methylideneamino]imidazole-4-carboxamide = 5-[(5-phospho-1-deoxy-D-ribulos-1-ylimino)methylamino]-1-(5-phospho-beta-D-ribosyl)imidazole-4-carboxamide. It functions in the pathway amino-acid biosynthesis; L-histidine biosynthesis; L-histidine from 5-phospho-alpha-D-ribose 1-diphosphate: step 4/9. The polypeptide is 1-(5-phosphoribosyl)-5-[(5-phosphoribosylamino)methylideneamino] imidazole-4-carboxamide isomerase (HIS6) (Yarrowia lipolytica (strain CLIB 122 / E 150) (Yeast)).